Reading from the N-terminus, the 358-residue chain is Oligopeptide transport ATP-binding protein OppD (358 aa).

The ABC transporter domain maps to 8-259 (LEVKDLAISF…PRHPYTWGLL (252 aa)). ATP is bound at residue 44 to 51 (GESGSGKS).

Belongs to the ABC transporter superfamily. In terms of assembly, the complex is composed of two ATP-binding proteins (OppD and OppF), two transmembrane proteins (OppB and OppC) and a solute-binding protein (OppA).

The protein resides in the cell membrane. The enzyme catalyses a [peptide](out) + ATP + H2O = a [peptide](in) + ADP + phosphate + H(+). Its function is as follows. Part of the ABC transporter complex OppABCDF involved in the uptake of oligopeptides. Probably responsible for energy coupling to the transport system. Required for sporulation and genetic competence. The sequence is that of Oligopeptide transport ATP-binding protein OppD from Bacillus subtilis (strain 168).